The chain runs to 140 residues: MRRMTDISPDKFAKAAEAIYEIFEKVVENHDEILDAIDKLLILERKGVFDEIVKFSEFKVPFTPDEIREIAERFEMLIKILLSVDERVLKVIKRLIDAFEESMVYEQMGMMEAMKALRDPDVQKAIGFALTLAKNFGKRI.

The protein to B.subtilis YrhD.

This is an uncharacterized protein from Archaeoglobus fulgidus (strain ATCC 49558 / DSM 4304 / JCM 9628 / NBRC 100126 / VC-16).